Reading from the N-terminus, the 448-residue chain is Glucan 1,3-beta-glucosidase I/II (448 aa).

Positions 1–19 are cleaved as a signal peptide; it reads MLSLKTLLCTLLTVSSVLA. A propeptide spanning residues 20 to 40 is cleaved from the precursor; that stretch reads TPVPARDPSSIQFVHEENKKR. The N-linked (GlcNAc...) asparagine glycan is linked to asparagine 165. Glutamate 232 serves as the catalytic Proton donor. Asparagine 325 is a glycosylation site (N-linked (GlcNAc...) asparagine). The active-site Nucleophile is glutamate 334.

It belongs to the glycosyl hydrolase 5 (cellulase A) family.

It is found in the secreted. The protein resides in the cell wall. The enzyme catalyses Successive hydrolysis of beta-D-glucose units from the non-reducing ends of (1-&gt;3)-beta-D-glucans, releasing alpha-glucose.. Its function is as follows. Glucanases possibly play a role in cell expansion during growth, in cell-cell fusion during mating, and in spore release during sporulation. This enzyme hydrolyzes both 1,3-beta- and 1,6-beta-linkages and even has beta-glucosidase activity. It could also function biosynthetically as a transglycosylase. The polypeptide is Glucan 1,3-beta-glucosidase I/II (EXG1) (Saccharomyces cerevisiae (strain ATCC 204508 / S288c) (Baker's yeast)).